A 234-amino-acid chain; its full sequence is Orotidine 5'-phosphate decarboxylase (234 aa).

Substrate is bound by residues Asp-11, Lys-33, 60-69 (DLKFHDIPNT), Thr-120, Arg-181, Gln-190, Gly-210, and Arg-211. The Proton donor role is filled by Lys-62.

Belongs to the OMP decarboxylase family. Type 1 subfamily. As to quaternary structure, homodimer.

The enzyme catalyses orotidine 5'-phosphate + H(+) = UMP + CO2. It participates in pyrimidine metabolism; UMP biosynthesis via de novo pathway; UMP from orotate: step 2/2. Its function is as follows. Catalyzes the decarboxylation of orotidine 5'-monophosphate (OMP) to uridine 5'-monophosphate (UMP). The polypeptide is Orotidine 5'-phosphate decarboxylase (Aliivibrio salmonicida (strain LFI1238) (Vibrio salmonicida (strain LFI1238))).